We begin with the raw amino-acid sequence, 382 residues long: Pyrimidine monooxygenase RutA (382 aa).

FMN-binding positions include 68-69 (IK), asparagine 134, glutamate 143, 159-160 (RY), and serine 209.

It belongs to the NtaA/SnaA/DszA monooxygenase family. RutA subfamily.

The enzyme catalyses uracil + FMNH2 + NADH + O2 = (Z)-3-ureidoacrylate + FMN + NAD(+) + H2O + H(+). It carries out the reaction thymine + FMNH2 + NADH + O2 = (Z)-2-methylureidoacrylate + FMN + NAD(+) + H2O + H(+). Functionally, catalyzes the pyrimidine ring opening between N-3 and C-4 by an unusual flavin hydroperoxide-catalyzed mechanism, adding oxygen atoms in the process to yield ureidoacrylate peracid, that immediately reacts with FMN forming ureidoacrylate and FMN-N(5)-oxide. The FMN-N(5)-oxide reacts spontaneously with NADH to produce FMN. Requires the flavin reductase RutF to regenerate FMN in vivo. The chain is Pyrimidine monooxygenase RutA from Escherichia coli O55:H7 (strain CB9615 / EPEC).